The sequence spans 147 residues: UPF0306 protein YhbP (147 aa).

The protein belongs to the UPF0306 family.

The chain is UPF0306 protein YhbP from Shigella boydii serotype 4 (strain Sb227).